We begin with the raw amino-acid sequence, 513 residues long: Light-independent protochlorophyllide reductase subunit B (513 aa).

D36 lines the [4Fe-4S] cluster pocket. Residue D299 is the Proton donor of the active site. Position 434-435 (434-435) interacts with substrate; the sequence is GM.

The protein belongs to the ChlB/BchB/BchZ family. Protochlorophyllide reductase is composed of three subunits; ChlL, ChlN and ChlB. Forms a heterotetramer of two ChlB and two ChlN subunits. [4Fe-4S] cluster serves as cofactor.

The protein resides in the plastid. Its subcellular location is the chloroplast. The catalysed reaction is chlorophyllide a + oxidized 2[4Fe-4S]-[ferredoxin] + 2 ADP + 2 phosphate = protochlorophyllide a + reduced 2[4Fe-4S]-[ferredoxin] + 2 ATP + 2 H2O. Its pathway is porphyrin-containing compound metabolism; chlorophyll biosynthesis (light-independent). Component of the dark-operative protochlorophyllide reductase (DPOR) that uses Mg-ATP and reduced ferredoxin to reduce ring D of protochlorophyllide (Pchlide) to form chlorophyllide a (Chlide). This reaction is light-independent. The NB-protein (ChlN-ChlB) is the catalytic component of the complex. This chain is Light-independent protochlorophyllide reductase subunit B, found in Chaetosphaeridium globosum (Charophycean green alga).